The following is an 833-amino-acid chain: Neurogenic locus protein delta (833 aa).

An N-terminal signal peptide occupies residues 1–18 (MHWIKCLLTAFICFTVIV). Residues 19–594 (QVHSSGSFEL…ARADGLTNAQ (576 aa)) are Extracellular-facing. Disulfide bonds link Cys-46–Cys-61 and Cys-68–Cys-82. N-linked (GlcNAc...) asparagine glycans are attached at residues Asn-98, Asn-137, and Asn-167. In terms of domain architecture, DSL spans 182 to 226 (VTCDLNYYGSGCAKFCRPRDDSFGHSTCSETGEIICLTGWQGDYC). Cystine bridges form between Cys-184–Cys-193, Cys-197–Cys-209, Cys-217–Cys-226, Cys-231–Cys-240, Cys-235–Cys-246, Cys-248–Cys-257, Cys-260–Cys-271, Cys-266–Cys-277, Cys-279–Cys-288, Cys-295–Cys-307, Cys-301–Cys-317, Cys-319–Cys-328, Cys-335–Cys-348, Cys-342–Cys-360, Cys-362–Cys-371, Cys-378–Cys-388, Cys-383–Cys-404, Cys-406–Cys-415, Cys-422–Cys-433, Cys-427–Cys-439, Cys-441–Cys-450, Cys-457–Cys-468, Cys-462–Cys-477, Cys-479–Cys-488, Cys-495–Cys-506, Cys-500–Cys-515, Cys-517–Cys-526, Cys-533–Cys-544, Cys-538–Cys-553, and Cys-555–Cys-564. EGF-like domains lie at 227-258 (HIPKCAKGCEHGHCDKPNQCVCQLGWKGALCN), 256-289 (LCNECVLEPNCIHGTCNKPWTCICNEGWGGLYCN), 291-329 (DLNYCTNHRPCKNGGTCFNTGEGLYTCKCAPGYSGDDCE), 331-372 (EIYS…KMCE), 374-416 (KVLT…PNCD), and 418-451 (QLDNCSPNPCINGGSCQPSGKCICPAGFSGTRCE). In terms of domain architecture, EGF-like 7; calcium-binding spans 453-489 (NIDDCLGHQCENGGTCIDMVNQYRCQCVPGFHGTHCS). In terms of domain architecture, EGF-like 8 spans 491-527 (KVDLCLIRPCANGGTCLNLNNDYQCTCRAGFTGKDCS). In terms of domain architecture, EGF-like 9; calcium-binding spans 529 to 565 (DIDECSSGPCHNGGTCMNRVNSFECVCANGFRGKQCD). Residues 595-617 (VVLIAVFSVAMPLVAVIAACVVF) form a helical membrane-spanning segment. At 618 to 833 (CMKRKRKRAQ…RSVVCGTPHM (216 aa)) the chain is on the cytoplasmic side. A Phosphothreonine modification is found at Thr-666. The segment at 743–773 (QLNTDPTLMHRGSPAGSSAKGASGGGPGAAE) is disordered. Residues 754–763 (GSPAGSSAKG) are compositionally biased toward low complexity.

As to quaternary structure, interacts with Notch (N) via the EGF repeats and the N EGF repeats. In terms of processing, ubiquitinated by Mib, leading to its endocytosis and subsequent degradation. Detected in all areas with neurogenic abilities, for example the neurogenic ectoderm and the primordia of the sense organs. Later expression is restricted to those cells that have adopted a neural fate.

It localises to the membrane. Its function is as follows. Acts as a ligand for Notch (N) receptor. Essential for proper differentiation of ectoderm. Delta is required for the correct separation of neural and epidermal cell lineages. Fringe (fng) acts in the Golgi to determine the type of O-linked fucose on the EGF modules in N, altering the ability of N to bind with Delta. O-fut1 also has a role in modulating the interaction. The sequence is that of Neurogenic locus protein delta from Drosophila melanogaster (Fruit fly).